The sequence spans 268 residues: Large ribosomal subunit protein uL3 (268 aa).

Position 156 is an N5-methylglutamine (Q156). Over residues 242 to 259 (VENEAAPADADNAAPEAA) the composition is skewed to low complexity. A disordered region spans residues 242 to 268 (VENEAAPADADNAAPEAAADGEEGTQA).

Belongs to the universal ribosomal protein uL3 family. As to quaternary structure, part of the 50S ribosomal subunit. Forms a cluster with proteins L14 and L19. Methylated by PrmB.

Its function is as follows. One of the primary rRNA binding proteins, it binds directly near the 3'-end of the 23S rRNA, where it nucleates assembly of the 50S subunit. The protein is Large ribosomal subunit protein uL3 of Maricaulis maris (strain MCS10) (Caulobacter maris).